The sequence spans 457 residues: MQKYMLEARQLLALAIPVIIAQVAQTSMGFVDTVMAGGYSATDMAAVAIGTSIWLPAILFGHGLLLALTPVIAQLNGSGRRERIAHQVRQGFWLAGFVSILIMVVLWNAGYIIRSMDNIDPALADKAVGYLRALLWGAPGYLFFQVARNQCEGLAKTKPGMVMGFIGLLVNIPVNYIFIYGHFGMPELGGVGCGVATAAVYWVMFFSMISYVKRARSMRDIRNEQRFSKPDMDVLKRLAQLGLPIALALFFEVTLFAVVALLVSPLGIVDVAGHQIALNFSSLMFVLPMSLAAAVTIRVGYRLGQGSTLDAQTAARTGLGVGVCMAFCTALFTVTLREQIALLYNDNPEVITLASQLMLLAAIYQLSDSIQVIGSGILRGYKDTRSIFFITFTAYWVLGLPTGYILALTDLVVDRMGPAGFWMGFIIGLTSAAILMMLRMRFLQRQPSSVILQRAAR.

12 helical membrane passes run 11–31 (LLAL…MGFV), 53–73 (IWLP…PVIA), 93–113 (WLAG…GYII), 127–147 (AVGY…FQVA), 160–180 (GMVM…IFIY), 189–209 (GGVG…FSMI), 243–263 (LPIA…ALLV), 276–296 (IALN…AAVT), 314–334 (AART…LFTV), 357–377 (LMLL…GSGI), 387–407 (IFFI…YILA), and 418–438 (PAGF…LMML).

The protein belongs to the multi antimicrobial extrusion (MATE) (TC 2.A.66.1) family. MdtK subfamily.

The protein resides in the cell inner membrane. Its function is as follows. Multidrug efflux pump that functions probably as a Na(+)/drug antiporter. In Enterobacter sp. (strain 638), this protein is Multidrug resistance protein MdtK.